We begin with the raw amino-acid sequence, 223 residues long: Serine/threonine/tyrosine-interacting protein (223 aa).

The 149-residue stretch at 28 to 176 folds into the Tyrosine-protein phosphatase domain; the sequence is EMQEILPGLF…LQEYEAIYLA (149 aa). Residues 76–78 carry the Interaction with FBXW7 motif; the sequence is FQQ. A phosphoserine mark is found at Ser-184, Ser-193, and Ser-201. The interval 197–223 is disordered; the sequence is GTTGSLKRTHEEEDDFGTMQVATAQNG.

This sequence belongs to the protein-tyrosine phosphatase family. Non-receptor class subfamily. In terms of assembly, interacts with MAPK1; independently of MAPK1 phosphorylation status. Interacts with CARHSP1/Crhsp-24. Interacts (via FQQ motif) with FBXW7 isoforms 1 (via F-box domain) and 3 (via F-box domain); the interaction is direct and prevents FBXW7 interaction with SKP1, a component of the SCF(FBXW7) complex. Does not interact with FBXW7 isoform 2.

The protein localises to the nucleus. It is found in the cytoplasm. Its subcellular location is the cytosol. Functionally, catalytically inactive phosphatase. Acts as a nuclear anchor for MAPK1/MAPK3 (ERK1/ERK2). Modulates cell-fate decisions and cell migration by spatiotemporal regulation of MAPK1/MAPK3 (ERK1/ERK2). By binding to the F-box of FBXW7, prevents the assembly of FBXW7 into the SCF E3 ubiquitin-protein ligase complex, and thereby inhibits degradation of its substrates. Plays a role in spermatogenesis. In Homo sapiens (Human), this protein is Serine/threonine/tyrosine-interacting protein.